The primary structure comprises 1645 residues: Histone-lysine N-methyltransferase set-26 (1645 aa).

Disordered stretches follow at residues 1–82 (MADG…QQIP), 109–132 (EPAAAADSRPLTEEEQLAAERPTE), 200–228 (DAVGPGSPGTQYRRNQQTGGGLPSTSVAP), 417–606 (TPEQ…VLRP), and 651–789 (TGQS…DEAA). Low complexity-rich tracts occupy residues 16 to 31 (EQPPLQQQQPEIAEPI) and 67 to 82 (QEFYQEPQIPEPQQIP). The span at 207-228 (PGTQYRRNQQTGGGLPSTSVAP) shows a compositional bias: polar residues. 2 stretches are compositionally biased toward low complexity: residues 429 to 443 (RQRAAPQFPAAAAQR) and 453 to 467 (RPGASSSRAPRPSMA). Basic and acidic residues predominate over residues 559–578 (MTQEEKNAHFARLTTDKEKP). Pro residues predominate over residues 592–603 (PHVPPPPPPPLV). Residues 651 to 675 (TGQSGSSAAARQRTVSGSAARAQTY) show a composition bias toward polar residues. 2 stretches are compositionally biased toward basic residues: residues 684-699 (QHHHQMPMDQRKRHSS) and 731-741 (HRPRGRPKGTR). A compositionally biased stretch (acidic residues) spans 780–789 (SESEGIDEAA). Residues 794–842 (TMRCHCGMDHGDGDTIECEGCKTWQHMACMGLTLKSNTSKYKCEMCLPR) form a PHD-type zinc finger. Residues 865–904 (AAKKQKRKSEPVEQKQKSQPSTSRKSAPMALQQQPAEPRV) are disordered. A compositionally biased stretch (polar residues) spans 881–899 (KSQPSTSRKSAPMALQQQP). Residues 973–1064 (MSNEVKRQPG…RNTEVTLPFD (92 aa)) form the SET domain. Over residues 1099 to 1172 (RHRAMDHKKR…EAKERKKMEV (74 aa)) the composition is skewed to basic and acidic residues. Disordered stretches follow at residues 1099-1333 (RHRA…SKNV), 1371-1536 (SGLL…STEG), and 1548-1645 (PLDD…TRWN). A coiled-coil region spans residues 1103–1217 (MDHKKREAEE…GKRKEARRRS (115 aa)). Residues 1173–1183 (EASAAAAPESS) are compositionally biased toward low complexity. The segment covering 1188-1210 (AREERRIQQAEEMFRRQEEEGKR) has biased composition (basic and acidic residues). Polar residues-rich tracts occupy residues 1258–1268 (TTQPSTSSFAT) and 1300–1311 (TVATPKDTTASN). 3 stretches are compositionally biased toward basic and acidic residues: residues 1382-1427 (SEVR…KKAN), 1434-1450 (KSEKAVEKAVEKVEKKP), and 1468-1485 (KKTEEVDGIEREASESSS). The segment covering 1554–1565 (SSSNTAPTTTIA) has biased composition (polar residues).

It belongs to the class V-like SAM-binding methyltransferase superfamily. In terms of tissue distribution, expressed both in the germline and in somatic tissues.

The protein resides in the nucleus. The catalysed reaction is L-lysyl(9)-[histone H3] + 3 S-adenosyl-L-methionine = N(6),N(6),N(6)-trimethyl-L-lysyl(9)-[histone H3] + 3 S-adenosyl-L-homocysteine + 3 H(+). Functionally, histone methyltransferase that mediates trimethylation of 'Lys-9' of histone H3 in vitro. Involved in transcriptional regulation. Plays a role in the negative regulation of lifespan and in heat resistance. Together with set-9, negatively regulates lifespan in a germline-independent, partially daf-16-dependent fashion. Together with set-9, plays a role in germline development and maintenance and might play a role in the restriction of the trimethylation mark on histone H3 'Lys-4'(H3K4me3) to target genes specifically in the germline. Together with spr-5, required for transgenerational fertility. The polypeptide is Histone-lysine N-methyltransferase set-26 (Caenorhabditis elegans).